A 398-amino-acid polypeptide reads, in one-letter code: SEC12-like protein 1 (398 aa).

An N-acetylmethionine modification is found at methionine 1. Residues 1 to 337 are Cytoplasmic-facing; it reads MEIEEASRES…TVPKEWKEWQ (337 aa). 5 WD repeats span residues 71–110, 120–159, 162–201, 252–291, and 296–334; these read DSDG…TGIT, QNAG…VILD, KAHK…PLST, LSRK…IYHY, and HLGQ…KEWK. A helical transmembrane segment spans residues 338–358; that stretch reads IYALLFCLFMASVIAAYVFFE. The Lumenal segment spans residues 359-398; sequence NSDSFWKLPMGKDQKRPKISLFGGSSSTPSEDHSRWNLDL.

In terms of tissue distribution, ubiquitous with higher levels in flowers, roots and senescing leaves.

Its subcellular location is the endoplasmic reticulum membrane. Functionally, involved in Pi uptake by facilitating the trafficking of PHT1-1/PHT1;1 from the endoplasmic reticulum to the plasma membrane. This chain is SEC12-like protein 1 (PHF1), found in Arabidopsis thaliana (Mouse-ear cress).